Reading from the N-terminus, the 672-residue chain is Iron-phytosiderophore transporter YSL15 (672 aa).

The span at M1 to V11 shows a compositional bias: basic and acidic residues. The interval M1–P27 is disordered. 14 helical membrane-spanning segments follow: residues G47–L67, G70–W90, C115–L135, G158–I178, L218–Y238, L279–I299, F325–V345, M390–F410, V418–L438, I450–V470, V504–F524, I556–L576, F602–W622, and A630–F650.

This sequence belongs to the YSL (TC 2.A.67.2) family. As to expression, expressed in root phloem and at low levels in the shoot companion cells.

It is found in the cell membrane. Involved in Fe(3+) uptake from the rhizosphere and phloem transport of iron. Plays an important role in iron homeostasis during the early stages of growth. Transports Fe(3+)-phytosiderophore, but not Fe(3+)- or Fe(2+)-nicotianamine. May not transport other chelated metals. The sequence is that of Iron-phytosiderophore transporter YSL15 (YSL15) from Oryza sativa subsp. japonica (Rice).